A 36-amino-acid polypeptide reads, in one-letter code: MTNLNLPSLFVPLVGLVFPAIAMASLFLHVQKNKIV.

Residues 8–28 traverse the membrane as a helical segment; the sequence is SLFVPLVGLVFPAIAMASLFL.

Belongs to the PsaI family.

The protein resides in the plastid. It localises to the chloroplast thylakoid membrane. Functionally, may help in the organization of the PsaL subunit. The chain is Photosystem I reaction center subunit VIII from Brassica oleracea (Wild cabbage).